Reading from the N-terminus, the 288-residue chain is ATP synthase gamma chain (288 aa).

The protein belongs to the ATPase gamma chain family. As to quaternary structure, F-type ATPases have 2 components, CF(1) - the catalytic core - and CF(0) - the membrane proton channel. CF(1) has five subunits: alpha(3), beta(3), gamma(1), delta(1), epsilon(1). CF(0) has three main subunits: a, b and c.

It is found in the cell membrane. Produces ATP from ADP in the presence of a proton gradient across the membrane. The gamma chain is believed to be important in regulating ATPase activity and the flow of protons through the CF(0) complex. This chain is ATP synthase gamma chain, found in Staphylococcus haemolyticus (strain JCSC1435).